An 88-amino-acid polypeptide reads, in one-letter code: Putative sulfur carrier protein AF_0552 (88 aa).

Belongs to the sulfur carrier protein CysO family.

The protein is Putative sulfur carrier protein AF_0552 of Archaeoglobus fulgidus (strain ATCC 49558 / DSM 4304 / JCM 9628 / NBRC 100126 / VC-16).